The primary structure comprises 261 residues: Thiazole synthase (261 aa).

Lys-95 (schiff-base intermediate with DXP) is an active-site residue. Residues Gly-156, 182-183 (AG), and 204-205 (NT) each bind 1-deoxy-D-xylulose 5-phosphate.

Belongs to the ThiG family. Homotetramer. Forms heterodimers with either ThiH or ThiS.

It is found in the cytoplasm. It carries out the reaction [ThiS sulfur-carrier protein]-C-terminal-Gly-aminoethanethioate + 2-iminoacetate + 1-deoxy-D-xylulose 5-phosphate = [ThiS sulfur-carrier protein]-C-terminal Gly-Gly + 2-[(2R,5Z)-2-carboxy-4-methylthiazol-5(2H)-ylidene]ethyl phosphate + 2 H2O + H(+). Its pathway is cofactor biosynthesis; thiamine diphosphate biosynthesis. Catalyzes the rearrangement of 1-deoxy-D-xylulose 5-phosphate (DXP) to produce the thiazole phosphate moiety of thiamine. Sulfur is provided by the thiocarboxylate moiety of the carrier protein ThiS. In vitro, sulfur can be provided by H(2)S. The polypeptide is Thiazole synthase (Pectobacterium atrosepticum (strain SCRI 1043 / ATCC BAA-672) (Erwinia carotovora subsp. atroseptica)).